Reading from the N-terminus, the 106-residue chain is UPF0145 protein CTC_01500 (106 aa).

This sequence belongs to the UPF0145 family.

The polypeptide is UPF0145 protein CTC_01500 (Clostridium tetani (strain Massachusetts / E88)).